Reading from the N-terminus, the 358-residue chain is Ribosomal RNA large subunit methyltransferase M (358 aa).

Residues serine 187, 220–223 (CPGG), aspartate 239, aspartate 259, and aspartate 276 each bind S-adenosyl-L-methionine. Catalysis depends on lysine 305, which acts as the Proton acceptor.

Belongs to the class I-like SAM-binding methyltransferase superfamily. RNA methyltransferase RlmE family. RlmM subfamily. Monomer.

Its subcellular location is the cytoplasm. The catalysed reaction is cytidine(2498) in 23S rRNA + S-adenosyl-L-methionine = 2'-O-methylcytidine(2498) in 23S rRNA + S-adenosyl-L-homocysteine + H(+). Functionally, catalyzes the 2'-O-methylation at nucleotide C2498 in 23S rRNA. The chain is Ribosomal RNA large subunit methyltransferase M from Shewanella woodyi (strain ATCC 51908 / MS32).